The primary structure comprises 362 residues: GDSL esterase/lipase 6 (362 aa).

The N-terminal stretch at Met1–Ala23 is a signal peptide. The active-site Nucleophile is the Ser38. N-linked (GlcNAc...) asparagine glycosylation is found at Asn50, Asn103, Asn107, Asn195, and Asn296. Catalysis depends on residues Asp323 and His326.

This sequence belongs to the 'GDSL' lipolytic enzyme family.

It is found in the secreted. The chain is GDSL esterase/lipase 6 (GLIP6) from Arabidopsis thaliana (Mouse-ear cress).